A 249-amino-acid chain; its full sequence is Ribosomal RNA small subunit methyltransferase J (249 aa).

S-adenosyl-L-methionine-binding positions include 99–100, 115–116, 151–152, and aspartate 169; these read RD, ER, and SS.

Belongs to the methyltransferase superfamily. RsmJ family.

It is found in the cytoplasm. The catalysed reaction is guanosine(1516) in 16S rRNA + S-adenosyl-L-methionine = N(2)-methylguanosine(1516) in 16S rRNA + S-adenosyl-L-homocysteine + H(+). In terms of biological role, specifically methylates the guanosine in position 1516 of 16S rRNA. This Shewanella oneidensis (strain ATCC 700550 / JCM 31522 / CIP 106686 / LMG 19005 / NCIMB 14063 / MR-1) protein is Ribosomal RNA small subunit methyltransferase J.